Reading from the N-terminus, the 268-residue chain is 4-hydroxy-tetrahydrodipicolinate reductase (268 aa).

NAD(+) contacts are provided by residues 7 to 12 (GAGGRM) and Glu33. Residue Arg34 coordinates NADP(+). Residues 97–99 (GTT) and 121–124 (SGNM) contribute to the NAD(+) site. His155 acts as the Proton donor/acceptor in catalysis. Residue His156 participates in (S)-2,3,4,5-tetrahydrodipicolinate binding. The active-site Proton donor is the Lys159. 165–166 (GT) contributes to the (S)-2,3,4,5-tetrahydrodipicolinate binding site.

Belongs to the DapB family.

The protein resides in the cytoplasm. The enzyme catalyses (S)-2,3,4,5-tetrahydrodipicolinate + NAD(+) + H2O = (2S,4S)-4-hydroxy-2,3,4,5-tetrahydrodipicolinate + NADH + H(+). It catalyses the reaction (S)-2,3,4,5-tetrahydrodipicolinate + NADP(+) + H2O = (2S,4S)-4-hydroxy-2,3,4,5-tetrahydrodipicolinate + NADPH + H(+). It functions in the pathway amino-acid biosynthesis; L-lysine biosynthesis via DAP pathway; (S)-tetrahydrodipicolinate from L-aspartate: step 4/4. Functionally, catalyzes the conversion of 4-hydroxy-tetrahydrodipicolinate (HTPA) to tetrahydrodipicolinate. This Brucella abortus (strain 2308) protein is 4-hydroxy-tetrahydrodipicolinate reductase.